Consider the following 256-residue polypeptide: Ribonuclease 3 (256 aa).

The 123-residue stretch at 3 to 125 folds into the RNase III domain; the sequence is LEALQQRLGY…IFGAVFLDGG (123 aa). Residue Glu38 participates in Mg(2+) binding. The active site involves Asp42. 2 residues coordinate Mg(2+): Asp111 and Glu114. Residue Glu114 is part of the active site. Residues 152-222 form the DRBM domain; it reads DAKTLLQEYL…AKLALEEAHR (71 aa). A disordered region spans residues 227–256; the sequence is LVKRSRAERTGKTRKQATPPDPQLSLRLKE.

It belongs to the ribonuclease III family. As to quaternary structure, homodimer. Mg(2+) is required as a cofactor.

The protein resides in the cytoplasm. The catalysed reaction is Endonucleolytic cleavage to 5'-phosphomonoester.. Functionally, digests double-stranded RNA. Involved in the processing of primary rRNA transcript to yield the immediate precursors to the large and small rRNAs (23S and 16S). Processes some mRNAs, and tRNAs when they are encoded in the rRNA operon. Processes pre-crRNA and tracrRNA of type II CRISPR loci if present in the organism. The sequence is that of Ribonuclease 3 from Ralstonia nicotianae (strain ATCC BAA-1114 / GMI1000) (Ralstonia solanacearum).